Reading from the N-terminus, the 174-residue chain is Suppressor of RNA silencing (174 aa).

A coiled-coil region spans residues 86-116; that stretch reads HAQLRSLNAELDTLEAREESLRAQIKALSAG.

Belongs to the virgaviridae suppressor of RNA silencing family.

Its function is as follows. Suppressor of RNA-mediated gene silencing, also known as post-transcriptional gene silencing (PTGS), a mechanism of plant viral defense that performs sequence-specific inhibition of viral mRNAs expression. This is Suppressor of RNA silencing from Soil-borne wheat mosaic virus (strain United States/Nebraska/1981) (SBWMV).